The chain runs to 119 residues: Ribosome-binding factor A (119 aa).

This sequence belongs to the RbfA family. Monomer. Binds 30S ribosomal subunits, but not 50S ribosomal subunits or 70S ribosomes.

Its subcellular location is the cytoplasm. Functionally, one of several proteins that assist in the late maturation steps of the functional core of the 30S ribosomal subunit. Associates with free 30S ribosomal subunits (but not with 30S subunits that are part of 70S ribosomes or polysomes). Required for efficient processing of 16S rRNA. May interact with the 5'-terminal helix region of 16S rRNA. The polypeptide is Ribosome-binding factor A (Ligilactobacillus salivarius (strain UCC118) (Lactobacillus salivarius)).